Consider the following 201-residue polypeptide: Recombination protein RecR (201 aa).

The segment at 60–75 adopts a C4-type zinc-finger fold; the sequence is CSRCFHFTDAEECSIC. Residues 83 to 178 form the Toprim domain; the sequence is GEICVVETTA…RVSRIAYGIP (96 aa).

This sequence belongs to the RecR family.

In terms of biological role, may play a role in DNA repair. It seems to be involved in an RecBC-independent recombinational process of DNA repair. It may act with RecF and RecO. This is Recombination protein RecR from Syntrophobacter fumaroxidans (strain DSM 10017 / MPOB).